The chain runs to 459 residues: Mitochondrial distribution and morphology protein 34 (459 aa).

In terms of domain architecture, SMP-LTD spans 1-190; sequence MSFRFNEAVF…LPSLIFNTSQ (190 aa). Over residues 338–347 the composition is skewed to basic and acidic residues; it reads RSNSNDDNAK. Positions 338-375 are disordered; the sequence is RSNSNDDNAKPRRRKIKCKKTRTPSNLQSQGEQAVDDS. A compositionally biased stretch (basic residues) spans 348–359; it reads PRRRKIKCKKTR.

Belongs to the MDM34 family. As to quaternary structure, component of the ER-mitochondria encounter structure (ERMES) or MDM complex, composed of MMM1, MDM10, MDM12 and MDM34. Post-translationally, ubiquitinated by a SCF (SKP1-CUL1-F-box protein) E3 ubiquitin-protein ligase complex containing the F-box protein MDM30. Ubiquitination is important for mitochondrial integrity.

The protein resides in the mitochondrion outer membrane. In terms of biological role, component of the ERMES/MDM complex, which serves as a molecular tether to connect the endoplasmic reticulum (ER) and mitochondria. Components of this complex are involved in the control of mitochondrial shape and protein biogenesis, and function in nonvesicular lipid trafficking between the ER and mitochondria. MDM34 is required for the interaction of the ER-resident membrane protein MMM1 and the outer mitochondrial membrane-resident beta-barrel protein MDM10. This Saccharomyces cerevisiae (strain RM11-1a) (Baker's yeast) protein is Mitochondrial distribution and morphology protein 34.